The primary structure comprises 407 residues: Peptidase T (407 aa).

Zn(2+) is bound at residue His82. Asp84 is an active-site residue. Asp143 provides a ligand contact to Zn(2+). Glu177 acts as the Proton acceptor in catalysis. Residues Glu178, Asp200, and His382 each contribute to the Zn(2+) site.

This sequence belongs to the peptidase M20B family. It depends on Zn(2+) as a cofactor.

The protein localises to the cytoplasm. It carries out the reaction Release of the N-terminal residue from a tripeptide.. Cleaves the N-terminal amino acid of tripeptides. This is Peptidase T from Streptococcus pyogenes serotype M49 (strain NZ131).